Here is a 394-residue protein sequence, read N- to C-terminus: Dimethyladenosine transferase 2, mitochondrial (394 aa).

Residues methionine 1–arginine 19 constitute a mitochondrion transit peptide. Valine 75, glutamate 123, and aspartate 149 together coordinate S-adenosyl-L-methionine. A DNA-binding region spans residues lysine 326–arginine 327.

This sequence belongs to the class I-like SAM-binding methyltransferase superfamily. rRNA adenine N(6)-methyltransferase family. KsgA subfamily. Homodimer. Component of the mitochondrial transcription initiation complex, composed at least of TFB2M, TFAM and POLRMT. In this complex TFAM recruits POLRMT to the promoter whereas TFB2M induces structural changes in POLRMT to enable promoter opening and trapping of the DNA non-template strand. Interacts with mitochondrial RNA polymerase POLRMT. Interacts with TFAM.

It is found in the mitochondrion. It carries out the reaction adenosine in rRNA + S-adenosyl-L-methionine = N(6)-methyladenosine in rRNA + S-adenosyl-L-homocysteine + H(+). In terms of biological role, S-adenosyl-L-methionine-dependent rRNA methyltransferase which may methylate two specific adjacent adenosines in the loop of a conserved hairpin near the 3'-end of 12S mitochondrial rRNA. Component of the mitochondrial transcription initiation complex, composed at least of TFB2M, TFAM and POLRMT that is required for basal transcription of mitochondrial DNA. In this complex TFAM recruits POLRMT to a specific promoter whereas TFB2M induces structural changes in POLRMT to enable promoter opening and trapping of the DNA non-template strand. Stimulates transcription independently of the methyltransferase activity. In Bos taurus (Bovine), this protein is Dimethyladenosine transferase 2, mitochondrial.